We begin with the raw amino-acid sequence, 280 residues long: Large ribosomal subunit protein uL2 (280 aa).

Disordered stretches follow at residues 1–58 (MAIR…GGGH) and 226–280 (MNPV…KHGR). Composition is skewed to basic residues over residues 37–58 (LHGH…GGGH) and 268–280 (IVRR…KHGR).

The protein belongs to the universal ribosomal protein uL2 family. Part of the 50S ribosomal subunit. Forms a bridge to the 30S subunit in the 70S ribosome.

Its function is as follows. One of the primary rRNA binding proteins. Required for association of the 30S and 50S subunits to form the 70S ribosome, for tRNA binding and peptide bond formation. It has been suggested to have peptidyltransferase activity; this is somewhat controversial. Makes several contacts with the 16S rRNA in the 70S ribosome. The sequence is that of Large ribosomal subunit protein uL2 from Mycobacterium avium (strain 104).